Here is a 729-residue protein sequence, read N- to C-terminus: Fatty acid oxidation complex subunit alpha (729 aa).

The enoyl-CoA hydratase/isomerase stretch occupies residues 1 to 189 (MLYKGDTLYL…KIGLVDGVVK (189 aa)). Aspartate 296 is a substrate binding site. The interval 311 to 729 (ETPKQAAVLG…ARPVGDLKTA (419 aa)) is 3-hydroxyacyl-CoA dehydrogenase. NAD(+)-binding positions include methionine 324, aspartate 343, 400 to 402 (VVE), lysine 407, and serine 429. Histidine 450 acts as the For 3-hydroxyacyl-CoA dehydrogenase activity in catalysis. Asparagine 453 is a binding site for NAD(+). Residues asparagine 500 and tyrosine 660 each contribute to the substrate site. The segment at 708-729 (RHNEPYYPPVEPARPVGDLKTA) is disordered.

It in the N-terminal section; belongs to the enoyl-CoA hydratase/isomerase family. In the C-terminal section; belongs to the 3-hydroxyacyl-CoA dehydrogenase family. As to quaternary structure, heterotetramer of two alpha chains (FadB) and two beta chains (FadA).

It carries out the reaction a (3S)-3-hydroxyacyl-CoA + NAD(+) = a 3-oxoacyl-CoA + NADH + H(+). It catalyses the reaction a (3S)-3-hydroxyacyl-CoA = a (2E)-enoyl-CoA + H2O. The catalysed reaction is a 4-saturated-(3S)-3-hydroxyacyl-CoA = a (3E)-enoyl-CoA + H2O. The enzyme catalyses (3S)-3-hydroxybutanoyl-CoA = (3R)-3-hydroxybutanoyl-CoA. It carries out the reaction a (3Z)-enoyl-CoA = a 4-saturated (2E)-enoyl-CoA. It catalyses the reaction a (3E)-enoyl-CoA = a 4-saturated (2E)-enoyl-CoA. It functions in the pathway lipid metabolism; fatty acid beta-oxidation. Functionally, involved in the aerobic and anaerobic degradation of long-chain fatty acids via beta-oxidation cycle. Catalyzes the formation of 3-oxoacyl-CoA from enoyl-CoA via L-3-hydroxyacyl-CoA. It can also use D-3-hydroxyacyl-CoA and cis-3-enoyl-CoA as substrate. The chain is Fatty acid oxidation complex subunit alpha from Escherichia coli O8 (strain IAI1).